A 408-amino-acid chain; its full sequence is tRNA(Met) cytidine acetate ligase (408 aa).

Residues 7 to 20, glycine 102, asparagine 170, and 195 to 196 contribute to the ATP site; these read IVEYNPFHNGHKYH and RI.

The protein belongs to the TmcAL family.

Its subcellular location is the cytoplasm. The enzyme catalyses cytidine(34) in elongator tRNA(Met) + acetate + ATP = N(4)-acetylcytidine(34) in elongator tRNA(Met) + AMP + diphosphate. Catalyzes the formation of N(4)-acetylcytidine (ac(4)C) at the wobble position of elongator tRNA(Met), using acetate and ATP as substrates. First activates an acetate ion to form acetyladenylate (Ac-AMP) and then transfers the acetyl group to tRNA to form ac(4)C34. This chain is tRNA(Met) cytidine acetate ligase, found in Clostridium kluyveri (strain NBRC 12016).